A 369-amino-acid chain; its full sequence is Epoxyqueuosine reductase (369 aa).

The active-site Proton donor is Asp135. The 4Fe-4S ferredoxin-type domain maps to 177–209 (IPLPVDEPSENQCGKCTACITSCPTNAIVAEGV). 8 residues coordinate [4Fe-4S] cluster: Cys189, Cys192, Cys195, Cys199, Cys215, Cys242, Cys245, and Cys249.

Belongs to the QueG family. In terms of assembly, monomer. The cofactor is cob(II)alamin. [4Fe-4S] cluster serves as cofactor.

The protein localises to the cytoplasm. It carries out the reaction epoxyqueuosine(34) in tRNA + AH2 = queuosine(34) in tRNA + A + H2O. Its pathway is tRNA modification; tRNA-queuosine biosynthesis. In terms of biological role, catalyzes the conversion of epoxyqueuosine (oQ) to queuosine (Q), which is a hypermodified base found in the wobble positions of tRNA(Asp), tRNA(Asn), tRNA(His) and tRNA(Tyr). The sequence is that of Epoxyqueuosine reductase from Vibrio cholerae serotype O1 (strain ATCC 39315 / El Tor Inaba N16961).